We begin with the raw amino-acid sequence, 601 residues long: Elongation factor 4 (601 aa).

Positions 5–187 (SNIRNFAIIA…AIVTKLPSPN (183 aa)) constitute a tr-type G domain. Residues 17 to 22 (DHGKST) and 134 to 137 (NKID) contribute to the GTP site.

It belongs to the TRAFAC class translation factor GTPase superfamily. Classic translation factor GTPase family. LepA subfamily.

The protein resides in the cell inner membrane. It catalyses the reaction GTP + H2O = GDP + phosphate + H(+). Required for accurate and efficient protein synthesis under certain stress conditions. May act as a fidelity factor of the translation reaction, by catalyzing a one-codon backward translocation of tRNAs on improperly translocated ribosomes. Back-translocation proceeds from a post-translocation (POST) complex to a pre-translocation (PRE) complex, thus giving elongation factor G a second chance to translocate the tRNAs correctly. Binds to ribosomes in a GTP-dependent manner. This is Elongation factor 4 from Orientia tsutsugamushi (strain Ikeda) (Rickettsia tsutsugamushi).